Here is a 344-residue protein sequence, read N- to C-terminus: Lipase chaperone (344 aa).

The helical transmembrane segment at 14-34 (AAIYGVVGLAAIAGVAMWSGA) threads the bilayer.

It belongs to the lipase chaperone family.

The protein localises to the cell inner membrane. May be involved in the folding of the extracellular lipase during its passage through the periplasm. The sequence is that of Lipase chaperone from Burkholderia cenocepacia (strain HI2424).